The following is a 280-amino-acid chain: Large ribosomal subunit protein uL2 (280 aa).

Disordered regions lie at residues 27-58 (STPE…GGGH) and 226-280 (MNPV…KHGR). 2 stretches are compositionally biased toward basic residues: residues 37–58 (LHGH…GGGH) and 268–280 (IVRR…KHGR).

The protein belongs to the universal ribosomal protein uL2 family. As to quaternary structure, part of the 50S ribosomal subunit. Forms a bridge to the 30S subunit in the 70S ribosome.

Its function is as follows. One of the primary rRNA binding proteins. Required for association of the 30S and 50S subunits to form the 70S ribosome, for tRNA binding and peptide bond formation. It has been suggested to have peptidyltransferase activity; this is somewhat controversial. Makes several contacts with the 16S rRNA in the 70S ribosome. The protein is Large ribosomal subunit protein uL2 of Mycobacterium ulcerans (strain Agy99).